Here is a 375-residue protein sequence, read N- to C-terminus: Alcohol dehydrogenase 1A (375 aa).

Residue serine 2 is modified to N-acetylserine. Serine 23 carries the post-translational modification Phosphoserine. A Zn(2+)-binding site is contributed by cysteine 47. 48–52 (GTDDH) provides a ligand contact to NAD(+). Histidine 68, cysteine 98, cysteine 101, cysteine 104, cysteine 112, and cysteine 175 together coordinate Zn(2+). Residues 200-205 (GLGGVG), aspartate 224, lysine 229, isoleucine 270, 293-295 (VGV), 318-320 (AVL), and arginine 370 contribute to the NAD(+) site.

The protein belongs to the zinc-containing alcohol dehydrogenase family. Dimer of identical or heterodimer of closely related subunits alpha, beta, or gamma that are encoded by genes ADH1A, ADH1B, and ADH1C, respectively. The cofactor is Zn(2+).

Its subcellular location is the cytoplasm. It catalyses the reaction a primary alcohol + NAD(+) = an aldehyde + NADH + H(+). The enzyme catalyses a secondary alcohol + NAD(+) = a ketone + NADH + H(+). The catalysed reaction is butan-1-ol + NAD(+) = butanal + NADH + H(+). It carries out the reaction 1-propanol + NAD(+) = propanal + NADH + H(+). Its function is as follows. Alcohol dehydrogenase. Oxidizes primary as well as secondary alcohols. Ethanol is a very poor substrate. This is Alcohol dehydrogenase 1A (ADH1A) from Pongo abelii (Sumatran orangutan).